We begin with the raw amino-acid sequence, 164 residues long: C-phycoerythrin alpha chain (164 aa).

Residues C82 and C139 each contribute to the (2R,3E)-phycoerythrobilin site.

Belongs to the phycobiliprotein family. Heterodimer of an alpha and a beta chain. In terms of processing, contains two covalently linked bilin chromophores.

Its subcellular location is the cellular thylakoid membrane. Its function is as follows. Light-harvesting photosynthetic bile pigment-protein from the phycobiliprotein complex. The polypeptide is C-phycoerythrin alpha chain (cpeA) (Synechocystis sp. (strain PCC 6701)).